The sequence spans 504 residues: Maturase K (504 aa).

It belongs to the intron maturase 2 family. MatK subfamily.

Its subcellular location is the plastid. The protein localises to the chloroplast. Functionally, usually encoded in the trnK tRNA gene intron. Probably assists in splicing its own and other chloroplast group II introns. The protein is Maturase K of Quercus suber (Cork oak).